We begin with the raw amino-acid sequence, 183 residues long: Hypoxanthine/guanine phosphoribosyltransferase (183 aa).

The protein belongs to the purine/pyrimidine phosphoribosyltransferase family. Archaeal HPRT subfamily. In terms of assembly, homodimer.

The protein localises to the cytoplasm. It carries out the reaction IMP + diphosphate = hypoxanthine + 5-phospho-alpha-D-ribose 1-diphosphate. The catalysed reaction is GMP + diphosphate = guanine + 5-phospho-alpha-D-ribose 1-diphosphate. The protein operates within purine metabolism; IMP biosynthesis via salvage pathway; IMP from hypoxanthine: step 1/1. In terms of biological role, catalyzes a salvage reaction resulting in the formation of IMP that is energically less costly than de novo synthesis. This chain is Hypoxanthine/guanine phosphoribosyltransferase, found in Methanocaldococcus infernus (strain DSM 11812 / JCM 15783 / ME).